We begin with the raw amino-acid sequence, 426 residues long: Histidine--tRNA ligase (426 aa).

The protein belongs to the class-II aminoacyl-tRNA synthetase family. Homodimer.

It is found in the cytoplasm. The enzyme catalyses tRNA(His) + L-histidine + ATP = L-histidyl-tRNA(His) + AMP + diphosphate + H(+). The sequence is that of Histidine--tRNA ligase from Hydrogenovibrio crunogenus (strain DSM 25203 / XCL-2) (Thiomicrospira crunogena).